The chain runs to 109 residues: ATPase inhibitor, mitochondrial (109 aa).

A mitochondrion-targeting transit peptide spans 1–22; it reads MAGSSSLLRAGIRNVLLMQMRR. The N-terminal inhibitory region stretch occupies residues 27–56; sequence LGELGKGAGKGGGGGGSVREAGGAFGKRQA. The interval 27–109 is disordered; it reads LGELGKGAGK…KSKIKKLNDD (83 aa). Over residues 30 to 43 the composition is skewed to gly residues; sequence LGKGAGKGGGGGGS. Basic and acidic residues-rich tracts occupy residues 55–69 and 77–98; these read QAAE…KEQE and HHEE…EIER. Residues 71-109 adopt a coiled-coil conformation; it reads IASLRKHHEEEIRHHKGEIERLQKEIERHKSKIKKLNDD. An antiparallel alpha-helical coiled coil region region spans residues 78–109; it reads HEEEIRHHKGEIERLQKEIERHKSKIKKLNDD. Residues 99–109 are compositionally biased toward basic residues; sequence HKSKIKKLNDD.

The protein belongs to the ATPase inhibitor family. As to quaternary structure, homodimer; represents the active form and is present at a pH value below 6.5. Homotetramer; represents the inactive form and is present at a pH value above 7.0.

It is found in the mitochondrion. Functionally, endogenous F(1)F(o)-ATPase inhibitor limiting ATP depletion when the mitochondrial membrane potential falls below a threshold and the F(1)F(o)-ATP synthase starts hydrolyzing ATP to pump protons out of the mitochondrial matrix. Required to avoid the consumption of cellular ATP when the F(1)F(o)-ATP synthase enzyme acts as an ATP hydrolase. Indirectly acts as a regulator of heme synthesis in erythroid tissues: regulates heme synthesis by modulating the mitochondrial pH and redox potential, allowing fech to efficiently catalyze the incorporation of iron into protoporphyrin IX to produce heme. The protein is ATPase inhibitor, mitochondrial of Xenopus tropicalis (Western clawed frog).